Consider the following 196-residue polypeptide: MAVSSCQSIMSNSMTNISSRSRVNQFTNIPSVYIPTLRRNVSLKVRSMAEGEPKEQSKVAVDPTTPTASTPTPQPAYTRPPKMSTKFSDLMAFSGPAPERINGRLAMIGFVAAMGVEIAKGQGLSEQLSGGGVAWFLGTSVLLSLASLIPFFQGVSVESKSKSIMSSDAEFWNGRIAMLGLVALAFTEFVKGTSLV.

A chloroplast-targeting transit peptide spans 1-48; the sequence is MAVSSCQSIMSNSMTNISSRSRVNQFTNIPSVYIPTLRRNVSLKVRSM. Residues 47–57 are compositionally biased toward basic and acidic residues; the sequence is SMAEGEPKEQS. Residues 47-81 form a disordered region; sequence SMAEGEPKEQSKVAVDPTTPTASTPTPQPAYTRPP. Transmembrane regions (helical) follow at residues 105–125, 132–152, and 176–196; these read LAMI…QGLS, GVAW…IPFF, and IAML…TSLV.

It belongs to the ELIP/psbS family.

The protein resides in the plastid. Its subcellular location is the chloroplast membrane. Its function is as follows. Probably involved in the integration of pigments into the mature pigment-protein complexes. The polypeptide is Early light-induced protein, chloroplastic (Pisum sativum (Garden pea)).